The chain runs to 931 residues: Ribosome-releasing factor 2, mitochondrial (931 aa).

The 317-residue stretch at 63 to 379 (EKTRNIGIIA…AVNNLLPGPS (317 aa)) folds into the tr-type G domain. GTP-binding positions include 72–79 (AHIDAGKT), 162–166 (DTPGH), and 216–219 (NKLD).

The protein belongs to the TRAFAC class translation factor GTPase superfamily. Classic translation factor GTPase family. EF-G/EF-2 subfamily.

It is found in the mitochondrion. Mitochondrial GTPase that mediates the disassembly of ribosomes from messenger RNA at the termination of mitochondrial protein biosynthesis. Not involved in the GTP-dependent ribosomal translocation step during translation elongation. This Talaromyces stipitatus (strain ATCC 10500 / CBS 375.48 / QM 6759 / NRRL 1006) (Penicillium stipitatum) protein is Ribosome-releasing factor 2, mitochondrial (mef2).